The sequence spans 615 residues: 1-deoxy-D-xylulose-5-phosphate synthase (615 aa).

Residues histidine 72 and glycine 111–serine 113 contribute to the thiamine diphosphate site. Aspartate 142 is a binding site for Mg(2+). Thiamine diphosphate is bound by residues glycine 143–alanine 144, asparagine 171, tyrosine 278, and glutamate 360. Residue asparagine 171 participates in Mg(2+) binding.

This sequence belongs to the transketolase family. DXPS subfamily. Homodimer. Mg(2+) serves as cofactor. Requires thiamine diphosphate as cofactor.

The enzyme catalyses D-glyceraldehyde 3-phosphate + pyruvate + H(+) = 1-deoxy-D-xylulose 5-phosphate + CO2. Its pathway is metabolic intermediate biosynthesis; 1-deoxy-D-xylulose 5-phosphate biosynthesis; 1-deoxy-D-xylulose 5-phosphate from D-glyceraldehyde 3-phosphate and pyruvate: step 1/1. Catalyzes the acyloin condensation reaction between C atoms 2 and 3 of pyruvate and glyceraldehyde 3-phosphate to yield 1-deoxy-D-xylulose-5-phosphate (DXP). The polypeptide is 1-deoxy-D-xylulose-5-phosphate synthase (Campylobacter jejuni subsp. jejuni serotype O:2 (strain ATCC 700819 / NCTC 11168)).